The primary structure comprises 217 residues: Large ribosomal subunit protein uL1A (217 aa).

Serine 2 carries the post-translational modification N-acetylserine. Residue lysine 47 is modified to N6-methyllysine; by RKM5. Phosphoserine occurs at positions 79 and 86.

The protein belongs to the universal ribosomal protein uL1 family. In terms of assembly, component of the large ribosomal subunit (LSU). Mature yeast ribosomes consist of a small (40S) and a large (60S) subunit. The 40S small subunit contains 1 molecule of ribosomal RNA (18S rRNA) and 33 different proteins (encoded by 57 genes). The large 60S subunit contains 3 rRNA molecules (25S, 5.8S and 5S rRNA) and 46 different proteins (encoded by 81 genes). uL1 forms part of the L1 stalk. In terms of processing, N-terminally acetylated by acetyltransferase NatA.

Its subcellular location is the cytoplasm. Its function is as follows. Component of the ribosome, a large ribonucleoprotein complex responsible for the synthesis of proteins in the cell. The small ribosomal subunit (SSU) binds messenger RNAs (mRNAs) and translates the encoded message by selecting cognate aminoacyl-transfer RNA (tRNA) molecules. The large subunit (LSU) contains the ribosomal catalytic site termed the peptidyl transferase center (PTC), which catalyzes the formation of peptide bonds, thereby polymerizing the amino acids delivered by tRNAs into a polypeptide chain. The nascent polypeptides leave the ribosome through a tunnel in the LSU and interact with protein factors that function in enzymatic processing, targeting, and the membrane insertion of nascent chains at the exit of the ribosomal tunnel. uL1 forms part of the L1 stalk, a mobile element that plays a role in evacuating the exit-site tRNA. The sequence is that of Large ribosomal subunit protein uL1A from Saccharomyces cerevisiae (strain ATCC 204508 / S288c) (Baker's yeast).